A 1465-amino-acid chain; its full sequence is Ankyrin and armadillo repeat-containing protein (1465 aa).

A helical membrane pass occupies residues 313–329 (MGYLKLICFLIPFLLSL). 5 ANK repeats span residues 532-561 (AGYA…NVNQ), 582-611 (NGPT…DYTL), 615-644 (RGWM…SLLE), 651-680 (NQCT…NWRK), and 684-714 (KGNN…ELPV). ARM repeat units lie at residues 745-784 (DRYW…NIST), 786-825 (VSIV…DVAK), 827-865 (ENKD…VLCM), 868-907 (ESNQ…EVAR), 910-949 (KEVQ…SLAN), and 1085-1125 (PMSQ…CIVL). Residues 1431–1465 (KLGKDEQKANPDPPAFLNKLGKDEQNANPDPAESQ) form a disordered region.

Its subcellular location is the membrane. This is Ankyrin and armadillo repeat-containing protein (Ankar) from Mus musculus (Mouse).